We begin with the raw amino-acid sequence, 149 residues long: Protein SprT-like (149 aa).

The SprT-like domain occupies 4 to 143 (TDYVKQVSLE…CGLCRGKLLL (140 aa)). A Zn(2+)-binding site is contributed by His64. Residue Glu65 is part of the active site. His68 provides a ligand contact to Zn(2+).

The protein belongs to the SprT family. It depends on Zn(2+) as a cofactor.

The protein resides in the cytoplasm. This is Protein SprT-like from Streptococcus pneumoniae (strain Taiwan19F-14).